Consider the following 64-residue polypeptide: Prokaryotic ubiquitin-like protein Pup (64 aa).

Positions 1 to 38 are disordered; that stretch reads MAQEQTKRGGGGGEDDDPTGSTAAGQERREKLTEETDD. An ARC ATPase binding region spans residues 21–58; the sequence is STAAGQERREKLTEETDDLLDEIDDVLEENAEDFVRAY. Residues 23-52 adopt a coiled-coil conformation; it reads AAGQERREKLTEETDDLLDEIDDVLEENAE. Residue Gln-64 is modified to Deamidated glutamine. Gln-64 participates in a covalent cross-link: Isoglutamyl lysine isopeptide (Gln-Lys) (interchain with K-? in acceptor proteins).

The protein belongs to the prokaryotic ubiquitin-like protein family. As to quaternary structure, strongly interacts with the proteasome-associated ATPase ARC through a hydrophobic interface; the interacting region of Pup lies in its C-terminal half. There is one Pup binding site per ARC hexamer ring. Is modified by deamidation of its C-terminal glutamine to glutamate by the deamidase Dop, a prerequisite to the subsequent pupylation process.

It functions in the pathway protein degradation; proteasomal Pup-dependent pathway. Its function is as follows. Protein modifier that is covalently attached to lysine residues of substrate proteins, thereby targeting them for proteasomal degradation. The tagging system is termed pupylation. The chain is Prokaryotic ubiquitin-like protein Pup from Mycolicibacterium gilvum (strain PYR-GCK) (Mycobacterium gilvum (strain PYR-GCK)).